Here is a 531-residue protein sequence, read N- to C-terminus: Putative cysteine ligase BshC (531 aa).

A coiled-coil region spans residues 447 to 481; it reads KAQEKKQTKGLDNLEKRLLKAEKKMHSEKLKKIIE.

It belongs to the BshC family.

The chain is Putative cysteine ligase BshC from Flavobacterium psychrophilum (strain ATCC 49511 / DSM 21280 / CIP 103535 / JIP02/86).